The primary structure comprises 425 residues: UPF0597 protein VIBHAR_03081 (425 aa).

The protein belongs to the UPF0597 family.

The polypeptide is UPF0597 protein VIBHAR_03081 (Vibrio campbellii (strain ATCC BAA-1116)).